The sequence spans 621 residues: Hemolysin ahh1 (621 aa).

The first 30 residues, methionine 1–alanine 30, serve as a signal peptide directing secretion. Residues arginine 491 to serine 610 enclose the Ricin B-type lectin domain.

Belongs to the HlyA hemolysin family.

In terms of biological role, bacterial hemolysins are exotoxins that attack blood cell membranes and cause cell rupture by mechanisms not clearly defined. The polypeptide is Hemolysin ahh1 (ahh1) (Aeromonas hydrophila subsp. hydrophila (strain ATCC 7966 / DSM 30187 / BCRC 13018 / CCUG 14551 / JCM 1027 / KCTC 2358 / NCIMB 9240 / NCTC 8049)).